We begin with the raw amino-acid sequence, 133 residues long: Holo-[acyl-carrier-protein] synthase (133 aa).

The Mg(2+) site is built by aspartate 8 and glutamate 58.

It belongs to the P-Pant transferase superfamily. AcpS family. It depends on Mg(2+) as a cofactor.

It localises to the cytoplasm. It carries out the reaction apo-[ACP] + CoA = holo-[ACP] + adenosine 3',5'-bisphosphate + H(+). Its function is as follows. Transfers the 4'-phosphopantetheine moiety from coenzyme A to a Ser of acyl-carrier-protein. In Sphingopyxis alaskensis (strain DSM 13593 / LMG 18877 / RB2256) (Sphingomonas alaskensis), this protein is Holo-[acyl-carrier-protein] synthase.